Consider the following 524-residue polypeptide: Na(+)/H(+) antiporter NhaB (524 aa).

12 helical membrane passes run 23 to 43 (IAIL…PFYA), 44 to 64 (GWLL…CYPL), 97 to 117 (LLLI…LFVF), 120 to 140 (LLLN…AAAF), 144 to 164 (FLDA…FYGI), 203 to 223 (LLMH…VGEP), 236 to 256 (FVSF…CGIL), 304 to 324 (ALVG…VGLI), 354 to 374 (FTAL…QHLF), 392 to 412 (LFYL…VGTV), 448 to 468 (ATPN…APLI), and 476 to 496 (VWMA…CVIF).

The protein belongs to the NhaB Na(+)/H(+) (TC 2.A.34) antiporter family.

Its subcellular location is the cell inner membrane. It carries out the reaction 2 Na(+)(in) + 3 H(+)(out) = 2 Na(+)(out) + 3 H(+)(in). Its function is as follows. Na(+)/H(+) antiporter that extrudes sodium in exchange for external protons. This chain is Na(+)/H(+) antiporter NhaB, found in Edwardsiella ictaluri (strain 93-146).